Consider the following 504-residue polypeptide: Maturase K (504 aa).

Belongs to the intron maturase 2 family. MatK subfamily.

It is found in the plastid. Its subcellular location is the chloroplast. Usually encoded in the trnK tRNA gene intron. Probably assists in splicing its own and other chloroplast group II introns. This Hamamelis virginiana (Witch-hazel) protein is Maturase K.